Consider the following 121-residue polypeptide: SLFELGKMILQETGKNPAKSYGAYYCYCGWGGQGQPKDATDRCCYVHKCCYKKLTGCNPKKDRYSYSWKDKTIVCGENNSCLKELCECDKAVAICLRENLNTYNKKYRYYLKPLCKKADAC.

Cystine bridges form between C26–C115, C28–C44, C43–C95, C49–C121, C50–C88, C57–C81, and C75–C86. An important for membrane-damaging activities in eukaryotes and bacteria; heparin-binding region spans residues 105-117 (KKYRYYLKPLCKK).

This sequence belongs to the phospholipase A2 family. Group II subfamily. K49 sub-subfamily. As to quaternary structure, homodimer; non-covalently linked. Expressed by the venom gland.

The protein localises to the secreted. Its function is as follows. Snake venom phospholipase A2 homolog that lacks enzymatic activity. Is myotoxic and displays edema-inducing activities. In vitro, produced time-dependent, irreversible neuromuscular blockade in isolated mouse phrenic nerve-diaphragm and chick biventer cervicis preparations. A model of myotoxic mechanism has been proposed: an apo Lys49-PLA2 is activated by the entrance of a hydrophobic molecule (e.g. fatty acid) at the hydrophobic channel of the protein leading to a reorientation of a monomer. This reorientation causes a transition between 'inactive' to 'active' states, causing alignment of C-terminal and membrane-docking sites (MDoS) side-by-side and putting the membrane-disruption sites (MDiS) in the same plane, exposed to solvent and in a symmetric position for both monomers. The MDoS region stabilizes the toxin on membrane by the interaction of charged residues with phospholipid head groups. Subsequently, the MDiS region destabilizes the membrane with penetration of hydrophobic residues. This insertion causes a disorganization of the membrane, allowing an uncontrolled influx of ions (i.e. calcium and sodium), and eventually triggering irreversible intracellular alterations and cell death. This Bothrops alternatus (Urutu) protein is Basic phospholipase A2 homolog BaTX.